Reading from the N-terminus, the 276-residue chain is Rhomboid protease GlpG (276 aa).

Helical transmembrane passes span 94–114 (GPVT…MSLI), 142–162 (IFMH…WYLG), 169–189 (LGSG…GYVQ), 192–212 (FSGP…GYVW), 229–249 (LIIF…GMSM), and 250–270 (ANGA…VDTL). The Nucleophile role is filled by Ser201. His254 is a catalytic residue.

The protein belongs to the peptidase S54 family.

It localises to the cell inner membrane. The enzyme catalyses Cleaves type-1 transmembrane domains using a catalytic dyad composed of serine and histidine that are contributed by different transmembrane domains.. Functionally, rhomboid-type serine protease that catalyzes intramembrane proteolysis. The chain is Rhomboid protease GlpG from Salmonella agona (strain SL483).